The sequence spans 311 residues: Cytochrome c biogenesis protein CcsA (311 aa).

The next 8 membrane-spanning stretches (helical) occupy residues 11-31 (VLLL…LAFW), 44-64 (VVQL…LWRW), 68-88 (GHFP…GCTF), 101-121 (LVPA…SFAL), 146-166 (VIMM…AVLF), 217-237 (TITV…VWAN), 251-268 (TWAL…HTRL), and 280-300 (VAVS…LLGI).

The protein belongs to the CcmF/CycK/Ccl1/NrfE/CcsA family. May interact with ccs1.

It localises to the cellular thylakoid membrane. In terms of biological role, required during biogenesis of c-type cytochromes (cytochrome c6 and cytochrome f) at the step of heme attachment. The polypeptide is Cytochrome c biogenesis protein CcsA (Synechococcus sp. (strain RCC307)).